The primary structure comprises 187 residues: UPF0301 protein VC_0467 (187 aa).

This sequence belongs to the UPF0301 (AlgH) family.

The polypeptide is UPF0301 protein VC_0467 (Vibrio cholerae serotype O1 (strain ATCC 39315 / El Tor Inaba N16961)).